A 764-amino-acid polypeptide reads, in one-letter code: Zinc finger CCCH domain-containing protein 24 (764 aa).

2 ANK repeats span residues 108 to 138 and 143 to 175; these read EHRT…DVNR and DGTT…DADA. A C3H1-type zinc finger spans residues 321–348; the sequence is HYSCVPCPDFRKGVCRRGDMCEYAHGVF. Disordered stretches follow at residues 616-665 and 698-732; these read QREK…DWGV and KESP…EGPS. The segment covering 640–659 has biased composition (low complexity); sequence SGVVGSPLSSSWSKWGSPSG. Over residues 705-716 the composition is skewed to polar residues; the sequence is QVTTAESINSVG.

This is Zinc finger CCCH domain-containing protein 24 from Oryza sativa subsp. japonica (Rice).